Reading from the N-terminus, the 396-residue chain is Agropine synthesis cyclase (396 aa).

Belongs to the peptidase M24B family.

The sequence is that of Agropine synthesis cyclase (ags) from Rhizobium rhizogenes (Agrobacterium rhizogenes).